A 1048-amino-acid chain; its full sequence is Protein argonaute 7 (1048 aa).

The segment covering 1-14 has biased composition (basic and acidic residues); that stretch reads MEGEREGVVAKNED. Disordered regions lie at residues 1-50 and 121-141; these read MEGE…GSSG and KAADAAPRGSMWKHRPSKKPP. Residues 16–37 are compositionally biased toward gly residues; the sequence is AGGGGGGLGTGGNGGGGGGGSA. The segment covering 131-141 has biased composition (basic residues); sequence MWKHRPSKKPP. The PAZ domain maps to 422–530; the sequence is KRCDFLKDLP…VPMELCVVCE (109 aa). The Piwi domain occupies 709–1017; sequence LLICVMERRH…AAYRGRLYLE (309 aa).

This sequence belongs to the argonaute family. Ago subfamily. As to expression, expressed in the reproductive shoot apex.

In terms of biological role, involved in the RNA silencing pathway. May bind to short RNAs such as microRNAs (miRNAs) or short interfering RNAs (siRNAs), and represses the translation of mRNAs which are complementary to them. Regulates shoot apical meristem (SAM) initiation and maintenance and leaf polarization through the trans-acting siRNAS (ta-siRNAs) pathway which probably modulates the expression of the ARF2, ARF3, ARF4, ARF14 and ARF15 genes. The chain is Protein argonaute 7 (AGO7) from Oryza sativa subsp. japonica (Rice).